We begin with the raw amino-acid sequence, 425 residues long: UBX domain-containing protein 4 (425 aa).

The disordered stretch occupies residues T224 to K257. Residues Y236–N254 are compositionally biased toward polar residues. S338 carries the phosphoserine modification. The 50-residue stretch at P341–T390 folds into the UBX domain.

It is found in the cytoplasm. Its subcellular location is the nucleus. In terms of biological role, involved in CDC48-dependent protein degradation through the ubiquitin/proteasome pathway. The sequence is that of UBX domain-containing protein 4 (ubx4) from Schizosaccharomyces pombe (strain 972 / ATCC 24843) (Fission yeast).